Here is a 127-residue protein sequence, read N- to C-terminus: Fumarate reductase subunit C (127 aa).

3 consecutive transmembrane segments (helical) span residues 30–50 (ATIL…GCLV), 67–87 (IVVV…QTFF), and 107–127 (IIVL…LVLV).

The protein belongs to the FrdC family. In terms of assembly, part of an enzyme complex containing four subunits: a flavoprotein (FrdA), an iron-sulfur protein (FrdB), and two hydrophobic anchor proteins (FrdC and FrdD).

The protein resides in the cell inner membrane. In terms of biological role, anchors the catalytic components of the fumarate reductase complex to the cell membrane, binds quinones. This is Fumarate reductase subunit C from Photobacterium profundum (strain SS9).